We begin with the raw amino-acid sequence, 339 residues long: Glucokinase (339 aa).

16 to 21 lines the ATP pocket; that stretch reads GDIGGT.

It belongs to the bacterial glucokinase family.

It is found in the cytoplasm. It carries out the reaction D-glucose + ATP = D-glucose 6-phosphate + ADP + H(+). In Pseudomonas paraeruginosa (strain DSM 24068 / PA7) (Pseudomonas aeruginosa (strain PA7)), this protein is Glucokinase.